We begin with the raw amino-acid sequence, 135 residues long: Small ribosomal subunit protein uS11 (135 aa).

This sequence belongs to the universal ribosomal protein uS11 family. In terms of assembly, part of the 30S ribosomal subunit. Interacts with proteins S7 and S18. Binds to IF-3.

Its function is as follows. Located on the platform of the 30S subunit, it bridges several disparate RNA helices of the 16S rRNA. Forms part of the Shine-Dalgarno cleft in the 70S ribosome. The protein is Small ribosomal subunit protein uS11 of Corynebacterium urealyticum (strain ATCC 43042 / DSM 7109).